The following is a 145-amino-acid chain: Histone H2B.1, sperm (145 aa).

The interval 1–52 is disordered; sequence MPSQKSPTKRSPTKRSPTKRSPQKGGKGGKGAKRGGKAGKRRRGVQVKRRRR. 4 consecutive short sequence motifs (SPKK motif) follow at residues 6-9, 11-14, 16-19, and 21-24; these read SPTK and SPQK. Composition is skewed to basic residues over residues 7-22 and 30-52; these read PTKRSPTKRSPTKRSP and KGAKRGGKAGKRRRGVQVKRRRR. A phosphoserine mark is found at S16 and S21. O-linked (GlcNAc) serine glycosylation is present at S132. Residue K140 forms a Glycyl lysine isopeptide (Lys-Gly) (interchain with G-Cter in ubiquitin) linkage.

This sequence belongs to the histone H2B family. As to quaternary structure, the nucleosome is a histone octamer containing two molecules each of H2A, H2B, H3 and H4 assembled in one H3-H4 heterotetramer and two H2A-H2B heterodimers. The octamer wraps approximately 147 bp of DNA. Monoubiquitination of Lys-140 gives a specific tag for epigenetic transcriptional activation and is also prerequisite for histone H3 'Lys-4' and 'Lys-79' methylation. In terms of processing, phosphorylated on SPKK motifs 3 and 4; which may regulate DNA binding. Dephosphorylated during maturation of spermatids to mature sperm and rephosphorylated at fertilization. Post-translationally, glcNAcylation at Ser-132 promotes monoubiquitination of Lys-140. It fluctuates in response to extracellular glucose, and associates with transcribed genes.

It localises to the nucleus. The protein localises to the chromosome. Core component of nucleosome. Nucleosomes wrap and compact DNA into chromatin, limiting DNA accessibility to the cellular machineries which require DNA as a template. Histones thereby play a central role in transcription regulation, DNA repair, DNA replication and chromosomal stability. DNA accessibility is regulated via a complex set of post-translational modifications of histones, also called histone code, and nucleosome remodeling. In Parechinus angulosus (Angulate sea urchin), this protein is Histone H2B.1, sperm.